The sequence spans 276 residues: ADP-dependent (S)-NAD(P)H-hydrate dehydratase (276 aa).

One can recognise a YjeF C-terminal domain in the interval 5 to 269 (TPKAMCAWIP…EELPTYLKIF (265 aa)). Positions 40, 103, and 152 each coordinate (6S)-NADPHX. Residue G211 participates in AMP binding. (6S)-NADPHX is bound at residue D212.

The protein belongs to the NnrD/CARKD family. As to quaternary structure, homotetramer. Mg(2+) serves as cofactor.

The enzyme catalyses (6S)-NADHX + ADP = AMP + phosphate + NADH + H(+). The catalysed reaction is (6S)-NADPHX + ADP = AMP + phosphate + NADPH + H(+). In terms of biological role, catalyzes the dehydration of the S-form of NAD(P)HX at the expense of ADP, which is converted to AMP. Together with NAD(P)HX epimerase, which catalyzes the epimerization of the S- and R-forms, the enzyme allows the repair of both epimers of NAD(P)HX, a damaged form of NAD(P)H that is a result of enzymatic or heat-dependent hydration. In Listeria monocytogenes serovar 1/2a (strain ATCC BAA-679 / EGD-e), this protein is ADP-dependent (S)-NAD(P)H-hydrate dehydratase.